Here is a 256-residue protein sequence, read N- to C-terminus: Thiazole synthase (256 aa).

The active-site Schiff-base intermediate with DXP is the Lys-98. 1-deoxy-D-xylulose 5-phosphate contacts are provided by residues Gly-159, 185 to 186 (AG), and 207 to 208 (NT).

The protein belongs to the ThiG family. Homotetramer. Forms heterodimers with either ThiH or ThiS.

It is found in the cytoplasm. The catalysed reaction is [ThiS sulfur-carrier protein]-C-terminal-Gly-aminoethanethioate + 2-iminoacetate + 1-deoxy-D-xylulose 5-phosphate = [ThiS sulfur-carrier protein]-C-terminal Gly-Gly + 2-[(2R,5Z)-2-carboxy-4-methylthiazol-5(2H)-ylidene]ethyl phosphate + 2 H2O + H(+). It functions in the pathway cofactor biosynthesis; thiamine diphosphate biosynthesis. Its function is as follows. Catalyzes the rearrangement of 1-deoxy-D-xylulose 5-phosphate (DXP) to produce the thiazole phosphate moiety of thiamine. Sulfur is provided by the thiocarboxylate moiety of the carrier protein ThiS. In vitro, sulfur can be provided by H(2)S. This Syntrophobacter fumaroxidans (strain DSM 10017 / MPOB) protein is Thiazole synthase.